The chain runs to 330 residues: Cathepsin S (330 aa).

Positions 1-17 are cleaved as a signal peptide; the sequence is MAVLGAPGVLCDNGATA. The propeptide at 18-112 is activation peptide; that stretch reads ERPTLDHHWD…GTLKSSSNQT (95 aa). N-linked (GlcNAc...) asparagine glycosylation is found at N100 and N110. 4 disulfide bridges follow: C124-C222, C134-C179, C168-C211, and C271-C319. C137 is an active-site residue. Active-site residues include H277 and N297.

Belongs to the peptidase C1 family. As to quaternary structure, monomer. Highest levels occur in the ileum followed by spleen, brain, thyroid, ovary and uterus. Low levels are found in the liver, kidney, jejunum and lung with lowest levels in the heart.

The protein localises to the lysosome. It localises to the secreted. Its subcellular location is the cytoplasmic vesicle. The protein resides in the phagosome. The catalysed reaction is Similar to cathepsin L, but with much less activity on Z-Phe-Arg-|-NHMec, and more activity on the Z-Val-Val-Arg-|-Xaa compound.. Thiol protease. Key protease responsible for the removal of the invariant chain from MHC class II molecules and MHC class II antigen presentation. The bond-specificity of this proteinase is in part similar to the specificities of cathepsin L. The sequence is that of Cathepsin S (Ctss) from Rattus norvegicus (Rat).